The primary structure comprises 378 residues: tRNA N(3)-cytidine methyltransferase METTL2 (378 aa).

S-adenosyl-L-methionine-binding residues include Trp-78, Tyr-82, Gly-188, Asp-213, Asp-239, Leu-240, and Ile-260.

This sequence belongs to the methyltransferase superfamily. METL family. In terms of assembly, monomer. Interacts with DALRD3.

It localises to the cytoplasm. It carries out the reaction cytidine(32) in tRNA(Thr) + S-adenosyl-L-methionine = N(3)-methylcytidine(32) in tRNA(Thr) + S-adenosyl-L-homocysteine + H(+). The enzyme catalyses cytidine(32) in tRNA(Arg)(CCU) + S-adenosyl-L-methionine = N(3)-methylcytidine(32) in tRNA(Arg)(CCU) + S-adenosyl-L-homocysteine + H(+). Functionally, S-adenosyl-L-methionine-dependent methyltransferase that mediates N(3)-methylcytidine modification of residue 32 of the tRNA anticodon loop of tRNA(Thr)(UGU) and tRNA(Arg)(CCU). N(3)-methylcytidine methylation by METTL2 requires the N6-threonylcarbamoylation of tRNA (t6A37) by the EKC/KEOPS complex as prerequisite. This Bos taurus (Bovine) protein is tRNA N(3)-cytidine methyltransferase METTL2 (METTL2).